The chain runs to 236 residues: Lipoarabinomannan carrier protein LprG (236 aa).

A signal peptide spans 1–26 (MRTPRRHCRRIAVLAAVSIAATVVAG). Cys27 carries N-palmitoyl cysteine lipidation. Cys27 is lipidated: S-diacylglycerol cysteine.

It belongs to the LppX/LprAFG lipoprotein family. Post-translationally, modified by Lgt on Cys-27 with an S-linked diacylglyceral, signal peptide is removed by LspA, Cys-27 is further modifed with a fatty acid on its amino group by Lnt yielding a triacylated protein.

It is found in the cell inner membrane. It localises to the secreted. The protein localises to the cell wall. Its function is as follows. Helps membrane protein Mb1445c (P55) transport triacylglycerides (TAG) across the inner cell membrane into the periplasm and probably ultimately to the outer membrane. Binds TAG in its hydrophobic cavity and transfers it between lipid bilayers. TAG probably regulates lipid metabolism and growth regulation and plays a structural role in the outer membrane. Binds di- and triacylated phosphatidyl-myo-inositol mannosides (PIMs), and glycolipid lipoglycan modulins lipoarabinomannan (LAM) and lipomannan (LM), facilitating their recognition by TLR2. Required for activity of drug efflux transporter Mb1445c. Required, probably with Mb1445c, for normal surface localization of LAM. Functionally, constitutes a host TLR2 agonist (toll-like receptor). This chain is Lipoarabinomannan carrier protein LprG, found in Mycobacterium bovis (strain ATCC BAA-935 / AF2122/97).